A 212-amino-acid polypeptide reads, in one-letter code: Peptide methionine sulfoxide reductase MsrA (212 aa).

Over residues 1 to 14 (MNSIDKTQRITQSD) the composition is skewed to polar residues. A disordered region spans residues 1-21 (MNSIDKTQRITQSDALPGRST). Residue C52 is part of the active site.

Belongs to the MsrA Met sulfoxide reductase family.

The catalysed reaction is L-methionyl-[protein] + [thioredoxin]-disulfide + H2O = L-methionyl-(S)-S-oxide-[protein] + [thioredoxin]-dithiol. It catalyses the reaction [thioredoxin]-disulfide + L-methionine + H2O = L-methionine (S)-S-oxide + [thioredoxin]-dithiol. In terms of biological role, has an important function as a repair enzyme for proteins that have been inactivated by oxidation. Catalyzes the reversible oxidation-reduction of methionine sulfoxide in proteins to methionine. This chain is Peptide methionine sulfoxide reductase MsrA, found in Pectobacterium atrosepticum (strain SCRI 1043 / ATCC BAA-672) (Erwinia carotovora subsp. atroseptica).